Reading from the N-terminus, the 346-residue chain is Methylthioribose-1-phosphate isomerase (346 aa).

Substrate contacts are provided by residues 46–48 (RGA), Arg-89, and Gln-196. Residue Asp-237 is the Proton donor of the active site. 247–248 (NK) contributes to the substrate binding site.

The protein belongs to the eIF-2B alpha/beta/delta subunits family. MtnA subfamily.

It carries out the reaction 5-(methylsulfanyl)-alpha-D-ribose 1-phosphate = 5-(methylsulfanyl)-D-ribulose 1-phosphate. It functions in the pathway amino-acid biosynthesis; L-methionine biosynthesis via salvage pathway; L-methionine from S-methyl-5-thio-alpha-D-ribose 1-phosphate: step 1/6. Functionally, catalyzes the interconversion of methylthioribose-1-phosphate (MTR-1-P) into methylthioribulose-1-phosphate (MTRu-1-P). This is Methylthioribose-1-phosphate isomerase from Geobacter metallireducens (strain ATCC 53774 / DSM 7210 / GS-15).